The following is a 193-amino-acid chain: HMG-Y-related protein A (193 aa).

Residues 11-81 (PIPPYPEMIL…LKNNYFRAGA (71 aa)) enclose the H15 domain. Positions 75 to 193 (NYFRAGAPDA…PAVPSETAAA (119 aa)) are disordered. A Nuclear localization signal 1 (NLS) motif is present at residues 86 to 92 (PKRGRGR). 4 DNA-binding regions (a.T hook) span residues 87 to 98 (KRGRGRPPKARD), 113 to 124 (GRGRGRPPKAKS), 138 to 149 (PKPRGRPPKKAK), and 173 to 184 (KRGRGRPPKVRP). The Nuclear localization signal 2 (NLS) motif lies at 145-149 (PKKAK).

It belongs to the histone H1/H5 family. Post-translationally, phosphorylated by CDK, this phosphorylation prevents DNA-binding. Motility is increased when hypophosphorylated. Acetylated.

It is found in the nucleus. The protein resides in the nucleolus. Binds A/T-rich DNA (e.g. present in the storage gamma-zein gene promoter) with a highly dynamic distribution into the nucleus. Probably involved in endosperm development, during cells shift from a mitotic cycle to endoreduplication leading to massive synthesis of storage proteins (zeins) and starch. In Zea mays (Maize), this protein is HMG-Y-related protein A.